Consider the following 883-residue polypeptide: Phosphoenolpyruvate carboxylase (883 aa).

Residues His138 and Lys546 contribute to the active site.

Belongs to the PEPCase type 1 family. Mg(2+) is required as a cofactor.

The catalysed reaction is oxaloacetate + phosphate = phosphoenolpyruvate + hydrogencarbonate. Forms oxaloacetate, a four-carbon dicarboxylic acid source for the tricarboxylic acid cycle. In Escherichia coli O7:K1 (strain IAI39 / ExPEC), this protein is Phosphoenolpyruvate carboxylase.